Here is a 504-residue protein sequence, read N- to C-terminus: Plasma protease C1 inhibitor (504 aa).

The N-terminal stretch at 1 to 22 (MASRLTPLTLLLLLLAGDRAFS) is a signal peptide. Residues 22–67 (SDPEATSHSTQDPLEAQAKSRESFPERDDSWSPPEPTVLPSTWPTT) are disordered. Residues 39-51 (AKSRESFPERDDS) are compositionally biased toward basic and acidic residues. N-linked (GlcNAc...) asparagine glycosylation is found at Asn75, Asn83, and Asn107. Over residues 85 to 124 (SFSQHSQPAAQLPTDSPGQPPLNSSSQPSTASDLPTQATT) the composition is skewed to polar residues. Residues 85-141 (SFSQHSQPAAQLPTDSPGQPPLNSSSQPSTASDLPTQATTEPFCPEPLAQCSDSDRD) are disordered. 2 disulfides stabilise this stretch: Cys128–Cys432 and Cys135–Cys210. 2 N-linked (GlcNAc...) asparagine glycosylation sites follow: Asn243 and Asn356.

The protein belongs to the serpin family. Interacts with MASP1.

Its subcellular location is the secreted. Its function is as follows. Serine protease inhibitor, which acrs as a regulator of the classical complement pathway. Forms a proteolytically inactive stoichiometric complex with the C1r or C1s proteases. May also regulate blood coagulation, fibrinolysis and the generation of kinins. Very efficient inhibitor of FXIIa. Inhibits chymotrypsin and kallikrein. The chain is Plasma protease C1 inhibitor (Serping1) from Mus musculus (Mouse).